Consider the following 225-residue polypeptide: Uridylate kinase (225 aa).

ATP is bound at residue 9–10 (GS). Residue G44 coordinates UMP. Positions 45 and 49 each coordinate ATP. UMP-binding positions include D66 and 114 to 120 (THPGHTT). Residues T140, N141, Y146, and D149 each coordinate ATP.

Belongs to the UMP kinase family. In terms of assembly, homohexamer.

It localises to the cytoplasm. The catalysed reaction is UMP + ATP = UDP + ADP. Its pathway is pyrimidine metabolism; CTP biosynthesis via de novo pathway; UDP from UMP (UMPK route): step 1/1. Inhibited by UTP. In terms of biological role, catalyzes the reversible phosphorylation of UMP to UDP. This chain is Uridylate kinase, found in Thermococcus kodakarensis (strain ATCC BAA-918 / JCM 12380 / KOD1) (Pyrococcus kodakaraensis (strain KOD1)).